The chain runs to 33 residues: U1-pseudomyrmecitoxin-Pt1 subunit LS2 (33 aa).

The protein belongs to the myrmexin family. Heterodimer composed of subunit LS2 and subunit SS1, heterodimer composed of subunit LS2 and SS2, and heterodimer composed of subunit LS2 and SS3; disulfide-linked. As to expression, expressed by the venom gland.

It localises to the secreted. In terms of biological role, this heterodimer may have anti-inflammatory properties, since the myrmexin complex (composed of 6 SS-LS heterodimers) inhibits carrageenin-induced edema in a dose-dependent manner (after subcutaneous injection into rats). In Pseudomyrmex triplarinus (Ant), this protein is U1-pseudomyrmecitoxin-Pt1 subunit LS2.